Consider the following 970-residue polypeptide: Sodium/calcium exchanger 1 (970 aa).

The signal sequence occupies residues 1–32 (MLRLRLSPTFSVGFHLLAFVPLLFSHVDLISA). The Extracellular portion of the chain corresponds to 33-71 (DTEMEGEGNETGECTGSYYCKKGVILPIWEPQDPSFGDK). An N-linked (GlcNAc...) asparagine glycan is attached at Asn41. A helical membrane pass occupies residues 72–92 (IARATVYFVAMVYMFLGVSII). Residues 93-133 (ADRFMSSIEVITSQEKEITIKKPNGETTKTTVRIWNETVSN) lie on the Cytoplasmic side of the membrane. Residues 134 to 154 (LTLMALGSSAPEILLSVIEVC) traverse the membrane as a helical segment. The stretch at 138–178 (ALGSSAPEILLSVIEVCGHNFTAGDLGPSTIVGSAAFNMFI) is one Alpha-1 repeat. Topologically, residues 155–167 (GHNFTAGDLGPST) are extracellular. A glycan (N-linked (GlcNAc...) asparagine) is linked at Asn157. Residues 168–188 (IVGSAAFNMFIIIALCVYVVP) traverse the membrane as a helical segment. Residues 189 to 201 (DGETRKIKHLRVF) are Cytoplasmic-facing. Residues 202-222 (FVTAAWSIFAYTWLYIILSVI) traverse the membrane as a helical segment. Over 223 to 228 (SPGVVE) the chain is Extracellular. Residues 229 to 249 (VWEGLLTFFFFPICVVFAWVA) form a helical membrane-spanning segment. The Cytoplasmic segment spans residues 250–797 (DRRLLFYKYV…FVPPTEYWNG (548 aa)). Residues 251–270 (RRLLFYKYVYKRYRAGKQRG) are putative calmodulin-binding region. Residues Ser282 and Ser389 each carry the phosphoserine modification. Calx-beta domains lie at 393 to 493 (VNTE…VHLS) and 524 to 624 (ATVT…LEIG). Ca(2+)-binding residues include Glu417, Asp453, Asp478, Asp479, Ile481, Glu483, Glu486, Asp530, Asp531, Asp532, Glu548, Asp584, Asp610, Glu611, Glu612, and Glu715. A helical membrane pass occupies residues 798–818 (WACFIVSILMIGILTAFIGDL). At 819–821 (ASH) the chain is on the extracellular side. The chain crosses the membrane as a helical span at residues 822-842 (FGCTIGLKDSVTAVVFVALGT). Residues 839 to 875 (ALGTSVPDTFASKVAATQDQYADASIGNVTGSNAVNV) form an Alpha-2 repeat. Over 843–871 (SVPDTFASKVAATQDQYADASIGNVTGSN) the chain is Cytoplasmic. The helical transmembrane segment at 872 to 892 (AVNVFLGIGVAWSIAAIYHAA) threads the bilayer. The Extracellular segment spans residues 893–903 (NGEQFKVSPGT). A helical transmembrane segment spans residues 904–924 (LAFSVTLFTIFAFINVGVLLY). At 925–941 (RRRPEIGGELGGPRTAK) the chain is on the cytoplasmic side. Residues 942–962 (LLTSCLFVLLWLLYIFFSSLE) traverse the membrane as a helical segment. Topologically, residues 963–970 (AYCHIKGF) are extracellular.

This sequence belongs to the Ca(2+):cation antiporter (CaCA) (TC 2.A.19) family. SLC8 subfamily. Detected in heart (at protein level). Detected in heart.

It is found in the cell membrane. It carries out the reaction Ca(2+)(in) + 3 Na(+)(out) = Ca(2+)(out) + 3 Na(+)(in). Its activity is regulated as follows. Activated by micromolar levels of Ca(2+). In terms of biological role, mediates the exchange of one Ca(2+) ion against three to four Na(+) ions across the cell membrane, and thereby contributes to the regulation of cytoplasmic Ca(2+) levels and Ca(2+)-dependent cellular processes. Contributes to Ca(2+) transport during excitation-contraction coupling in muscle. In a first phase, voltage-gated channels mediate the rapid increase of cytoplasmic Ca(2+) levels due to release of Ca(2+) stores from the endoplasmic reticulum. SLC8A1 mediates the export of Ca(2+) from the cell during the next phase, so that cytoplasmic Ca(2+) levels rapidly return to baseline. Required for normal embryonic heart development and the onset of heart contractions. The sequence is that of Sodium/calcium exchanger 1 (SLC8A1) from Felis catus (Cat).